Consider the following 493-residue polypeptide: Isoniazid-induced protein IniC (493 aa).

This Mycobacterium tuberculosis (strain CDC 1551 / Oshkosh) protein is Isoniazid-induced protein IniC (iniC).